The sequence spans 141 residues: Succinate dehydrogenase assembly factor 2, mitochondrial (141 aa).

It belongs to the SDHAF2 family. As to quaternary structure, interacts with the flavoprotein subunit within the SDH catalytic dimer.

Its subcellular location is the mitochondrion matrix. In terms of biological role, plays an essential role in the assembly of succinate dehydrogenase (SDH), an enzyme complex (also referred to as respiratory complex II) that is a component of both the tricarboxylic acid (TCA) cycle and the mitochondrial electron transport chain, and which couples the oxidation of succinate to fumarate with the reduction of ubiquinone (coenzyme Q) to ubiquinol. Required for flavinylation (covalent attachment of FAD) of the flavoprotein subunit of the SDH catalytic dimer. This chain is Succinate dehydrogenase assembly factor 2, mitochondrial, found in Dictyostelium discoideum (Social amoeba).